The sequence spans 295 residues: Methylamine utilization protein MauJ (295 aa).

It functions in the pathway one-carbon metabolism; methylamine degradation. The protein is Methylamine utilization protein MauJ (mauJ) of Methylorubrum extorquens (strain ATCC 14718 / DSM 1338 / JCM 2805 / NCIMB 9133 / AM1) (Methylobacterium extorquens).